The sequence spans 557 residues: Dihydroxy-acid dehydratase (557 aa).

Cys49 provides a ligand contact to [2Fe-2S] cluster. Asp81 is a Mg(2+) binding site. Residue Cys122 coordinates [2Fe-2S] cluster. Residues Asp123 and Lys124 each coordinate Mg(2+). At Lys124 the chain carries N6-carboxylysine. Cys194 is a binding site for [2Fe-2S] cluster. Glu446 provides a ligand contact to Mg(2+). Catalysis depends on Ser472, which acts as the Proton acceptor.

Belongs to the IlvD/Edd family. In terms of assembly, homodimer. The cofactor is [2Fe-2S] cluster. Requires Mg(2+) as cofactor.

The enzyme catalyses (2R)-2,3-dihydroxy-3-methylbutanoate = 3-methyl-2-oxobutanoate + H2O. The catalysed reaction is (2R,3R)-2,3-dihydroxy-3-methylpentanoate = (S)-3-methyl-2-oxopentanoate + H2O. It functions in the pathway amino-acid biosynthesis; L-isoleucine biosynthesis; L-isoleucine from 2-oxobutanoate: step 3/4. Its pathway is amino-acid biosynthesis; L-valine biosynthesis; L-valine from pyruvate: step 3/4. Functions in the biosynthesis of branched-chain amino acids. Catalyzes the dehydration of (2R,3R)-2,3-dihydroxy-3-methylpentanoate (2,3-dihydroxy-3-methylvalerate) into 2-oxo-3-methylpentanoate (2-oxo-3-methylvalerate) and of (2R)-2,3-dihydroxy-3-methylbutanoate (2,3-dihydroxyisovalerate) into 2-oxo-3-methylbutanoate (2-oxoisovalerate), the penultimate precursor to L-isoleucine and L-valine, respectively. This chain is Dihydroxy-acid dehydratase, found in Prochlorococcus marinus (strain MIT 9215).